Here is a 413-residue protein sequence, read N- to C-terminus: MRAEIISIGTELLLGEIINTNAQYIARELASLGIDVYHQSVIGDNETRLSEAFETAFKRSDVVITTGGLGPTKDDMTKETAASFFGKKLIPHEESLKKIEAYFKGRGLNVNEGNRKQGYFPEGSIVLPNPNGTAPACIIEENNKKLILLPGPPREMIPLFETQVLPYLKKFQDKFFSFKVLNVCGIGEGEMEEAIMDIVDHQTNPTVAPYAKPNGLTLRIAASGHTQKEADELIHPMEEQIRERLGLNIYGEDDISLEEIVAKILIEKKLTISIAESCTGGFLSGRLVNYPGISSVFMEGIVTYSNESKVKYLGVNPQTIEKYGAVSEEVAREMAEGICKSAHTNIGLSVTGLAGPSGGREDKPIGLVYVGICINGVTTVKELNLGGSRNRIRSLATTYTLDLLRREVLNRSL.

This sequence belongs to the CinA family.

The protein is Putative competence-damage inducible protein of Alkaliphilus oremlandii (strain OhILAs) (Clostridium oremlandii (strain OhILAs)).